Consider the following 250-residue polypeptide: Geranylgeranylglyceryl phosphate synthase (250 aa).

2 residues coordinate Mg(2+): aspartate 23 and serine 52. Sn-glycerol 1-phosphate is bound by residues tyrosine 170–glycine 176, glycine 202–glycine 203, and glycine 224–threonine 225.

It belongs to the GGGP/HepGP synthase family. Group II subfamily. The cofactor is Mg(2+).

The protein localises to the cytoplasm. It catalyses the reaction sn-glycerol 1-phosphate + (2E,6E,10E)-geranylgeranyl diphosphate = sn-3-O-(geranylgeranyl)glycerol 1-phosphate + diphosphate. It participates in membrane lipid metabolism; glycerophospholipid metabolism. Functionally, prenyltransferase that catalyzes the transfer of the geranylgeranyl moiety of geranylgeranyl diphosphate (GGPP) to the C3 hydroxyl of sn-glycerol-1-phosphate (G1P). This reaction is the first ether-bond-formation step in the biosynthesis of archaeal membrane lipids. The polypeptide is Geranylgeranylglyceryl phosphate synthase (Methanobrevibacter smithii (strain ATCC 35061 / DSM 861 / OCM 144 / PS)).